Consider the following 146-residue polypeptide: Leghemoglobin 49 (146 aa).

A Globin domain is found at 2–146; that stretch reads GFTQQQEALV…LATAIKKAMS (145 aa). A nitrated tyrosine mark is found at Tyr24 and Tyr29. Ser44 lines the heme b pocket. Ser44 is subject to Phosphoserine. An O2-binding site is contributed by His61. Heme b is bound by residues His93 and Lys96. Tyr134 is subject to Nitrated tyrosine.

Belongs to the plant globin family. As to quaternary structure, monomer. In terms of processing, nitrated in effective nodules and particularly in hypoxic conditions; this mechanism may play a protective role in the symbiosis by buffering toxic peroxynitrite NO(2)(-). Nitration level decrease during nodule senescence. Post-translationally, phosphorylation at Ser-44 disrupts the molecular environment of its porphyrin ring oxygen binding pocket, thus leading to a reduced oxygen consumption and to the delivery of oxygen O(2) to symbiosomes. In terms of tissue distribution, accumulates in root nodules after inoculation by bacteria of the genus Rhizobium.

The protein localises to the cytoplasm. It localises to the cytosol. It is found in the nucleus. In terms of biological role, leghemoglobin that reversibly binds oxygen O(2) through a pentacoordinated heme iron. In root nodules, facilitates the diffusion of oxygen to the bacteroids while preventing the bacterial nitrogenase from being inactivated by buffering dioxygen, nitric oxide and carbon monoxide, and promoting the formation of reactive oxygen species (ROS, e.g. H(2)O(2)). This role is essential for symbiotic nitrogen fixation (SNF). The polypeptide is Leghemoglobin 49 (Vicia faba (Broad bean)).